The primary structure comprises 500 residues: L-arabinose isomerase (500 aa).

E306, E333, H350, and H450 together coordinate Mn(2+).

The protein belongs to the arabinose isomerase family. As to quaternary structure, homohexamer. Mn(2+) serves as cofactor.

The enzyme catalyses beta-L-arabinopyranose = L-ribulose. It participates in carbohydrate degradation; L-arabinose degradation via L-ribulose; D-xylulose 5-phosphate from L-arabinose (bacterial route): step 1/3. Catalyzes the conversion of L-arabinose to L-ribulose. In Klebsiella pneumoniae subsp. pneumoniae (strain ATCC 700721 / MGH 78578), this protein is L-arabinose isomerase.